Consider the following 103-residue polypeptide: Large ribosomal subunit protein bL21 (103 aa).

The protein belongs to the bacterial ribosomal protein bL21 family. Part of the 50S ribosomal subunit. Contacts protein L20.

Its function is as follows. This protein binds to 23S rRNA in the presence of protein L20. The polypeptide is Large ribosomal subunit protein bL21 (Methylococcus capsulatus (strain ATCC 33009 / NCIMB 11132 / Bath)).